The sequence spans 398 residues: Succinate--CoA ligase [ADP-forming] subunit beta (398 aa).

The region spanning methionine 9 to glutamate 253 is the ATP-grasp domain. ATP is bound by residues lysine 46, glycine 53–glycine 55, valine 111, and glutamate 116. Positions 208 and 222 each coordinate Mg(2+). Residues asparagine 273 and glycine 330 to methionine 332 each bind substrate.

Belongs to the succinate/malate CoA ligase beta subunit family. In terms of assembly, heterotetramer of two alpha and two beta subunits. It depends on Mg(2+) as a cofactor.

The catalysed reaction is succinate + ATP + CoA = succinyl-CoA + ADP + phosphate. The enzyme catalyses GTP + succinate + CoA = succinyl-CoA + GDP + phosphate. It participates in carbohydrate metabolism; tricarboxylic acid cycle; succinate from succinyl-CoA (ligase route): step 1/1. Its function is as follows. Succinyl-CoA synthetase functions in the citric acid cycle (TCA), coupling the hydrolysis of succinyl-CoA to the synthesis of either ATP or GTP and thus represents the only step of substrate-level phosphorylation in the TCA. The beta subunit provides nucleotide specificity of the enzyme and binds the substrate succinate, while the binding sites for coenzyme A and phosphate are found in the alpha subunit. This is Succinate--CoA ligase [ADP-forming] subunit beta from Zymomonas mobilis subsp. mobilis (strain ATCC 31821 / ZM4 / CP4).